The following is a 116-amino-acid chain: Iron-sulfur cluster insertion protein ErpA (116 aa).

Iron-sulfur cluster contacts are provided by Cys-44, Cys-108, and Cys-110.

Belongs to the HesB/IscA family. In terms of assembly, homodimer. Requires iron-sulfur cluster as cofactor.

Required for insertion of 4Fe-4S clusters for at least IspG. This chain is Iron-sulfur cluster insertion protein ErpA, found in Aeromonas hydrophila subsp. hydrophila (strain ATCC 7966 / DSM 30187 / BCRC 13018 / CCUG 14551 / JCM 1027 / KCTC 2358 / NCIMB 9240 / NCTC 8049).